The primary structure comprises 335 residues: Nucleotide-binding protein CYA_0911 (335 aa).

An ATP-binding site is contributed by 20–27; the sequence is GLTGSGKT. Residues 306-335 are disordered; sequence ARFGPPPPAAGVEQQQVRIPLAGVPAPPHD.

The protein belongs to the RapZ-like family.

In terms of biological role, displays ATPase and GTPase activities. The chain is Nucleotide-binding protein CYA_0911 from Synechococcus sp. (strain JA-3-3Ab) (Cyanobacteria bacterium Yellowstone A-Prime).